A 438-amino-acid polypeptide reads, in one-letter code: Coenzyme A disulfide reductase (438 aa).

FAD is bound at residue 8–33 (GAVAGGATCASQIRRLDKESDIIIFE). Residues Thr-15, Gln-19, Arg-22, Ser-39, and Asn-42 each coordinate substrate. The Nucleophile role is filled by Cys-43. The Redox-active role is filled by Cys-43. Lys-71 contacts substrate. Residue 151–166 (VLVVGAGYVSLEVLEN) coordinates NADP(+). Position 267–277 (267–277 (TNVPNIYAIGD)) interacts with FAD. His-299 serves as a coordination point for substrate. Tyr-419 is an FAD binding site. Lys-427 contacts substrate.

It belongs to the class-III pyridine nucleotide-disulfide oxidoreductase family. In terms of assembly, homodimer. Requires FAD as cofactor.

It catalyses the reaction NADP(+) + 2 CoA = CoA-disulfide + NADPH + H(+). Functionally, catalyzes specifically the NADPH-dependent reduction of coenzyme A disulfide. This chain is Coenzyme A disulfide reductase, found in Staphylococcus aureus (strain MSSA476).